Consider the following 118-residue polypeptide: Probable dihydroneopterin aldolase (118 aa).

Substrate is bound by residues glutamate 21, tyrosine 53, and 72–73 (IE). The active-site Proton donor/acceptor is the lysine 98.

It belongs to the DHNA family.

It catalyses the reaction 7,8-dihydroneopterin = 6-hydroxymethyl-7,8-dihydropterin + glycolaldehyde. It functions in the pathway cofactor biosynthesis; tetrahydrofolate biosynthesis; 2-amino-4-hydroxy-6-hydroxymethyl-7,8-dihydropteridine diphosphate from 7,8-dihydroneopterin triphosphate: step 3/4. Catalyzes the conversion of 7,8-dihydroneopterin to 6-hydroxymethyl-7,8-dihydropterin. In Synechocystis sp. (strain ATCC 27184 / PCC 6803 / Kazusa), this protein is Probable dihydroneopterin aldolase (folB).